The primary structure comprises 160 residues: Sulfur-rich protein (160 aa).

2 helical membrane-spanning segments follow: residues 63 to 83 (ITMVVLGIILLIAGLALTFVL) and 92 to 112 (FLFLIPAVIGLVKLLATSVCM).

Its subcellular location is the membrane. This is Sulfur-rich protein (srp) from Chlamydophila psittaci (strain ATCC VR-125 / 6BC) (Chlamydia psittaci).